Here is a 158-residue protein sequence, read N- to C-terminus: Ribosome maturation factor RimP (158 aa).

The protein belongs to the RimP family.

The protein localises to the cytoplasm. In terms of biological role, required for maturation of 30S ribosomal subunits. The sequence is that of Ribosome maturation factor RimP from Lactiplantibacillus plantarum (strain ATCC BAA-793 / NCIMB 8826 / WCFS1) (Lactobacillus plantarum).